The sequence spans 340 residues: Protein-arginine kinase (340 aa).

The Phosphagen kinase C-terminal domain maps to 21-242 (VVLSSRIRLA…EQIIMQERVA (222 aa)). ATP contacts are provided by residues 24–28 (SSRIR), histidine 79, arginine 113, 164–168 (RASVM), and 195–200 (RGIYGE).

It belongs to the ATP:guanido phosphotransferase family.

It carries out the reaction L-arginyl-[protein] + ATP = N(omega)-phospho-L-arginyl-[protein] + ADP + H(+). Catalyzes the specific phosphorylation of arginine residues in proteins. This chain is Protein-arginine kinase, found in Listeria monocytogenes serovar 1/2a (strain ATCC BAA-679 / EGD-e).